The chain runs to 524 residues: Beta-glucosidase 23 (524 aa).

The N-terminal stretch at 1–24 is a signal peptide; that stretch reads MVLQKLPLIGLLLLLTIVASPANA. Q54 serves as a coordination point for a beta-D-glucoside. N60 carries N-linked (GlcNAc...) asparagine glycosylation. Residues H157 and 202-203 each bind a beta-D-glucoside; that span reads NE. The active-site Proton donor is the E203. Residues C222 and C230 are joined by a disulfide bond. Residues Y346 and E418 each coordinate a beta-D-glucoside. The Nucleophile role is filled by E418. Residue N461 is glycosylated (N-linked (GlcNAc...) asparagine). Residues W468, 475 to 476, and F484 each bind a beta-D-glucoside; that span reads EW. N-linked (GlcNAc...) asparagine glycosylation occurs at N494. Residues 521–524 carry the Prevents secretion from ER motif; the sequence is KDEL.

This sequence belongs to the glycosyl hydrolase 1 family. In terms of assembly, homodimers. Binds to the deubiquitinating enzyme AMSH3. The inactive form interacts with PBP1/JAL30 to form the PYK10 complex, at least composed of PYK10/BGLU23, BGLU21, BGLU22, JAL22, JAL23, PBP1/JAL30, PBP2/JAL31, JAL32, JAL33, JAL34, JAL35, GLL22 and GLL23. In terms of processing, forms interchain disulfide bonds. In terms of tissue distribution, expressed exclusively in roots.

It localises to the endoplasmic reticulum lumen. It carries out the reaction Hydrolysis of terminal, non-reducing beta-D-glucosyl residues with release of beta-D-glucose.. Activated by tissue damage and upon binding to PBP1 or PBP2. Functionally, beta-D-glucosidase active on scopolin &gt; esculin &gt;&gt; 4-MU-glucoside &gt;&gt; DIMBOA-glucoside. No activity with pNP-glucoside, oNP-glucoside and sinigrin as substrates. May possess beta-D-fucosidase activity. Required for the beneficial interaction with the endophytic fungus P.indica. May participate in the control of root colonization by P.indica by repressing defense responses and modulating other responses required for a mutualistic interaction. The sequence is that of Beta-glucosidase 23 from Arabidopsis thaliana (Mouse-ear cress).